The chain runs to 523 residues: NAD(P)H-quinone oxidoreductase subunit 2 (523 aa).

14 helical membrane passes run 29 to 49, 57 to 77, 94 to 114, 123 to 143, 147 to 167, 182 to 202, 223 to 243, 255 to 275, 291 to 311, 317 to 337, 345 to 365, 389 to 409, 424 to 444, and 477 to 497; these read AIAP…VDLA, WVPP…AQQW, LAIS…LISW, PIGE…LLCG, LVSV…LAGY, LLVG…LYGL, AALS…AVPF, PTPV…ALAL, LLFT…ALAQ, MLAY…VCGT, VLYM…IILF, LGLS…GFFG, LLVV…ISVI, and IALV…NPLF.

This sequence belongs to the complex I subunit 2 family. In terms of assembly, NDH-1 can be composed of about 15 different subunits; different subcomplexes with different compositions have been identified which probably have different functions.

Its subcellular location is the cellular thylakoid membrane. It catalyses the reaction a plastoquinone + NADH + (n+1) H(+)(in) = a plastoquinol + NAD(+) + n H(+)(out). It carries out the reaction a plastoquinone + NADPH + (n+1) H(+)(in) = a plastoquinol + NADP(+) + n H(+)(out). In terms of biological role, NDH-1 shuttles electrons from an unknown electron donor, via FMN and iron-sulfur (Fe-S) centers, to quinones in the respiratory and/or the photosynthetic chain. The immediate electron acceptor for the enzyme in this species is believed to be plastoquinone. Couples the redox reaction to proton translocation, and thus conserves the redox energy in a proton gradient. Cyanobacterial NDH-1 also plays a role in inorganic carbon-concentration. This chain is NAD(P)H-quinone oxidoreductase subunit 2, found in Prochlorococcus marinus (strain MIT 9313).